A 304-amino-acid chain; its full sequence is DnaJ homolog subfamily C member 17 (304 aa).

One can recognise a J domain in the interval 11-76 (DLYALLGIEE…AARAAYDKVR (66 aa)). Residues 79–106 (KKQAAERTQKLDEKRKKVKLDLEARERQ) show a composition bias toward basic and acidic residues. The disordered stretch occupies residues 79–145 (KKQAAERTQK…SRQLEEQQRL (67 aa)). Ser112 is modified (phosphoserine). Residues 118 to 145 (SRSTRTLEQEIERLREEGSRQLEEQQRL) show a composition bias toward basic and acidic residues. The region spanning 178 to 249 (KCKKEDESKG…NPLKISWLEG (72 aa)) is the RRM domain. Residue Lys264 is modified to N6-methyllysine.

It is found in the cytoplasm. It localises to the nucleus. Its function is as follows. May negatively affect PAX8-induced thyroglobulin/TG transcription. This Homo sapiens (Human) protein is DnaJ homolog subfamily C member 17 (DNAJC17).